An 866-amino-acid polypeptide reads, in one-letter code: Speckle targeted PIP5K1A-regulated poly(A) polymerase (866 aa).

The Matrin-type zinc finger occupies 16-46 (FRCCLCDVTTANRPSLDAHLKGRKHRDLVQL). The 73-residue stretch at 56–128 (RSVFVSGFPR…HTLRVRPREQ (73 aa)) folds into the RRM domain. The segment at 116 to 147 (LGGHTLRVRPREQKEFQSPASKSPKGVDSNSH) is disordered. Ser205 provides a ligand contact to ATP. Asp216 and Asp218 together coordinate Mg(2+). The UTP site is built by Asp216 and Asp218. 2 disordered regions span residues 223–249 (LGDM…STLA) and 267–321 (LSPT…EGKH). Positions 282-304 (TPSSLAPQTPDSALGSDTVTSPQ) are enriched in polar residues. Asn393 contacts ATP. Residues Asn393, Arg415, Tyr433, and His550 each contribute to the UTP site. One can recognise a PAP-associated domain in the interval 492–550 (LSSLLAQFFSCVSCWDLSGSLLSLREGQALMVAGGLPSDLWEGLRLGPMNLQDPFDLSH). Residues 599 to 866 (SSPSSLLSAK…IPQALKNLLK (268 aa)) form a KA1; binds the bulging loops of U6 snRNA but is dispensable for terminal uridylyltransferase activity region. Disordered regions lie at residues 638-687 (QGTK…DHSE), 728-755 (EQNP…PSSV), and 773-792 (RRRF…STGA). Basic and acidic residues predominate over residues 669 to 687 (KSCEEGKEEPQGCAGDHSE). A phosphoserine mark is found at Ser686 and Ser741.

The protein belongs to the DNA polymerase type-B-like family. As to quaternary structure, associates with the cleavage and polyadenylation specificity factor (CPSF) complex. Interacts with CPSF1 and CPSF3; the interaction is direct. Interacts with PIP5K1A. It depends on Mg(2+) as a cofactor. Requires Mn(2+) as cofactor. Phosphorylated by CK1 in the proline-rich (Pro-rich) region.

The protein resides in the nucleus. It localises to the nucleolus. The protein localises to the nucleus speckle. It catalyses the reaction RNA(n) + UTP = RNA(n)-3'-uridine ribonucleotide + diphosphate. It carries out the reaction RNA(n) + ATP = RNA(n)-3'-adenine ribonucleotide + diphosphate. Adenylyltransferase activity is specifically phosphatidylinositol 4,5-bisphosphate (PtdIns(4,5)P2). Poly(A) polymerase that creates the 3'-poly(A) tail of specific pre-mRNAs. Localizes to nuclear speckles together with PIP5K1A and mediates polyadenylation of a select set of mRNAs, such as HMOX1. In addition to polyadenylation, it is also required for the 3'-end cleavage of pre-mRNAs: binds to the 3'UTR of targeted pre-mRNAs and promotes the recruitment and assembly of the CPSF complex on the 3'UTR of pre-mRNAs. In addition to adenylyltransferase activity, also has uridylyltransferase activity. However, the ATP ratio is higher than UTP in cells, suggesting that it functions primarily as a poly(A) polymerase. Acts as a specific terminal uridylyltransferase for U6 snRNA in vitro: responsible for a controlled elongation reaction that results in the restoration of the four 3'-terminal UMP-residues found in newly transcribed U6 snRNA. Not involved in replication-dependent histone mRNA degradation. This chain is Speckle targeted PIP5K1A-regulated poly(A) polymerase (Tut1), found in Rattus norvegicus (Rat).